The chain runs to 212 residues: Leucine efflux protein (212 aa).

The next 6 helical transmembrane spans lie at 12-32, 49-69, 71-91, 122-142, 153-173, and 188-208; these read TYLV…LFVL, GVFI…ATLI, TTPI…LYLG, ILSL…VQFI, FFIL…FLII, and LAKV…ARLA.

This sequence belongs to the Rht family.

The protein localises to the cell inner membrane. The catalysed reaction is L-leucine(in) + H(+)(out) = L-leucine(out) + H(+)(in). Exporter of leucine. This is Leucine efflux protein (leuE) from Escherichia coli O157:H7.